We begin with the raw amino-acid sequence, 92 residues long: Turripeptide UID-02 (92 aa).

Residues 1-21 form the signal peptide; it reads MGFYMLLTVALLLTSLMNVEA. A propeptide spanning residues 22-39 is cleaved from the precursor; sequence TPVDQAERSALEKSGLGN.

Expressed by the venom duct.

Its subcellular location is the secreted. The chain is Turripeptide UID-02 from Gemmula speciosa (Splendid gem-turris).